The primary structure comprises 948 residues: Valine--tRNA ligase (948 aa).

The short motif at 40–50 (PNVTGSLHMGH) is the 'HIGH' region element. The 'KMSKS' region motif lies at 551 to 555 (KMSKS). K554 provides a ligand contact to ATP. The stretch at 879 to 945 (LIDKGAELAR…GKLAEQHARI (67 aa)) forms a coiled coil.

Belongs to the class-I aminoacyl-tRNA synthetase family. ValS type 1 subfamily. As to quaternary structure, monomer.

The protein resides in the cytoplasm. It catalyses the reaction tRNA(Val) + L-valine + ATP = L-valyl-tRNA(Val) + AMP + diphosphate. Functionally, catalyzes the attachment of valine to tRNA(Val). As ValRS can inadvertently accommodate and process structurally similar amino acids such as threonine, to avoid such errors, it has a 'posttransfer' editing activity that hydrolyzes mischarged Thr-tRNA(Val) in a tRNA-dependent manner. The protein is Valine--tRNA ligase of Pseudomonas savastanoi pv. phaseolicola (strain 1448A / Race 6) (Pseudomonas syringae pv. phaseolicola (strain 1448A / Race 6)).